Consider the following 906-residue polypeptide: Transmembrane channel-like protein 2 (906 aa).

The disordered stretch occupies residues 1–150; the sequence is MSHQVKGLKE…SASGGESLSE (150 aa). At 1–263 the chain is on the cytoplasmic side; that stretch reads MSHQVKGLKE…IFLRWMYGVN (263 aa). Basic residues predominate over residues 69 to 79; that stretch reads PRRKQTGRRRH. Over residues 80–127 the composition is skewed to basic and acidic residues; it reads REELGEQERGEAERTCEGRRKRDERASFQERTAAPKREKEIPRREEKS. Over residues 135–147 the composition is skewed to low complexity; that stretch reads SSSLASSASGGES. A helical membrane pass occupies residues 264–284; that stretch reads LVLFGLIFGLVIIPEVLMGMP. Residues 285 to 336 are Extracellular-facing; that stretch reads YGSIPRKTVPRAEEEKAMDFSVLWDFEGYIKYSALFYGYYNNQRTIGWLRYR. A helical transmembrane segment spans residues 337–357; the sequence is LPMAYFMVGVSVFGYSLIIVI. Residues 358-431 are Cytoplasmic-facing; that stretch reads RSMASNTQGS…NIHLTRFLRV (74 aa). Residues 432–452 traverse the membrane as a helical segment; sequence LANFLIICCLCGSGYLIYFVV. Residues 453-508 are Extracellular-facing; the sequence is KRSQQFSKMQNVSWYERNEVEIVMSLLGMFCPPLFETIAALENYHPRTGLKWQLGR. A helical membrane pass occupies residues 509-529; that stretch reads IFALFLGNLYTFLLALMDDVH. Topologically, residues 530–693 are cytoplasmic; it reads LKLANEETIK…RVFKASRSNN (164 aa). A helical transmembrane segment spans residues 694 to 714; sequence FYMGLLLLVLFLSLLPVAYTI. Topologically, residues 715 to 750 are extracellular; it reads MSLPPSFDCGPFSGKNRMYDVLQETIENDFPTFLGK. A helical membrane pass occupies residues 751–771; that stretch reads IFAFLANPGLIIPAILLMFLA. At 772-906 the chain is on the cytoplasmic side; that stretch reads IYYLNSVSKS…SGKSAQRPPH (135 aa). The disordered stretch occupies residues 800 to 906; the sequence is EKSHKSVKGK…SGKSAQRPPH (107 aa). 3 stretches are compositionally biased toward polar residues: residues 820–846, 854–866, and 886–900; these read KSSS…QSQA, PGTS…TTLP, and APSQ…SGKS.

Belongs to the TMC family. Forms the MET channel composed of TMC dimer (TMC1 or TMC2), TMIE, TOMT, CIB (CIB2 or CIB3), LHFPL5 and PDH15. The interaction of TMC1 and TMC2 with TOMT is required for the transportation of TMC1/2 into the stereocilia of hair cells. Interacts (via N-terminus) with both isoforms CD1 and CD3 of PCDH15. Can form a heterodimer with TMC1, TMC5 or TMC7. As to expression, detected in fetal cochlea.

The protein resides in the cell membrane. It carries out the reaction Ca(2+)(in) = Ca(2+)(out). In terms of biological role, pore-forming subunit of the mechanotransducer (MET) non-selective cation channel complex located at the tips of stereocilia of cochlear hair cells and that mediates sensory transduction in the auditory system. The MET complex is composed of two dimeric pore-forming ion-conducting transmembrane TMC (TMC1 or TMC2) subunits, and aided by several auxiliary proteins including LHFPL5, TMIE, CIB2/3 and TOMT, and the tip-link PCDH15. MET channel is activated by tension in the tip-link extending from the side wall of one stereocilium to the tip of the adjacent shorter stereocilium, where the channel is located. TMC2 MET channel is highly permeable to calcium and likely transports monovalent cations. Also involved in vestibular hair cell transduction current of the mammalian inner ear. The polypeptide is Transmembrane channel-like protein 2 (Homo sapiens (Human)).